The following is a 426-amino-acid chain: Histidine--tRNA ligase (426 aa).

It belongs to the class-II aminoacyl-tRNA synthetase family. Homodimer.

The protein localises to the cytoplasm. It carries out the reaction tRNA(His) + L-histidine + ATP = L-histidyl-tRNA(His) + AMP + diphosphate + H(+). In Pseudoalteromonas translucida (strain TAC 125), this protein is Histidine--tRNA ligase.